Reading from the N-terminus, the 265-residue chain is Anamorsin homolog 1 (265 aa).

An N-terminal SAM-like domain region spans residues 1-143; that stretch reads MAATVAEALA…KVSWSLGSSF (143 aa). The interval 144–175 is linker; it reads PLKKATKGLPKIQIDDDSELIDEDSLLTEDDL. The [2Fe-2S] cluster site is built by Cys-186, Cys-195, Cys-198, and Cys-200. The fe-S binding site A stretch occupies residues 186–200; that stretch reads CEVGATRKACKNCTC. The [4Fe-4S] cluster site is built by Cys-226, Cys-229, Cys-237, and Cys-240. 2 consecutive short sequence motifs (cx2C motif) follow at residues 226 to 229 and 237 to 240; these read CGNC and CGTC. The interval 226–240 is fe-S binding site B; the sequence is CGNCGLGDAFRCGTC.

It belongs to the anamorsin family. In terms of assembly, monomer. It depends on [2Fe-2S] cluster as a cofactor. Requires [4Fe-4S] cluster as cofactor.

Its subcellular location is the cytoplasm. The protein resides in the mitochondrion intermembrane space. Component of the cytosolic iron-sulfur (Fe-S) protein assembly (CIA) machinery. Required for the maturation of extramitochondrial Fe-S proteins. Part of an electron transfer chain functioning in an early step of cytosolic Fe-S biogenesis, facilitating the de novo assembly of a [4Fe-4S] cluster on the cytosolic Fe-S scaffold complex. Electrons are transferred from NADPH via a FAD- and FMN-containing diflavin oxidoreductase. Together with the diflavin oxidoreductase, also required for the assembly of the diferric tyrosyl radical cofactor of ribonucleotide reductase (RNR), probably by providing electrons for reduction during radical cofactor maturation in the catalytic small subunit. This chain is Anamorsin homolog 1, found in Oryza sativa subsp. japonica (Rice).